A 244-amino-acid polypeptide reads, in one-letter code: Phosphoadenosine 5'-phosphosulfate reductase (244 aa).

Cys239 acts as the Nucleophile; cysteine thiosulfonate intermediate in catalysis.

Belongs to the PAPS reductase family. CysH subfamily.

The protein localises to the cytoplasm. It catalyses the reaction [thioredoxin]-disulfide + sulfite + adenosine 3',5'-bisphosphate + 2 H(+) = [thioredoxin]-dithiol + 3'-phosphoadenylyl sulfate. Its pathway is sulfur metabolism; hydrogen sulfide biosynthesis; sulfite from sulfate: step 3/3. Its function is as follows. Catalyzes the formation of sulfite from phosphoadenosine 5'-phosphosulfate (PAPS) using thioredoxin as an electron donor. This Pectobacterium atrosepticum (strain SCRI 1043 / ATCC BAA-672) (Erwinia carotovora subsp. atroseptica) protein is Phosphoadenosine 5'-phosphosulfate reductase.